The primary structure comprises 157 residues: Transcription elongation factor GreA (157 aa).

A coiled-coil region spans residues 13–75 (RARLEAELEE…EIKSILARAQ (63 aa)). A disordered region spans residues 113-142 (EAKPSEGKISNESPIGSALLGKRPRQKVTV).

The protein belongs to the GreA/GreB family.

Necessary for efficient RNA polymerase transcription elongation past template-encoded arresting sites. The arresting sites in DNA have the property of trapping a certain fraction of elongating RNA polymerases that pass through, resulting in locked ternary complexes. Cleavage of the nascent transcript by cleavage factors such as GreA or GreB allows the resumption of elongation from the new 3'terminus. GreA releases sequences of 2 to 3 nucleotides. The chain is Transcription elongation factor GreA from Roseiflexus sp. (strain RS-1).